Reading from the N-terminus, the 377-residue chain is Chaperone protein DnaJ (377 aa).

A J domain is found at 5–70 (DYYEVLGVSR…DKKAAYDQFG (66 aa)). Residues 133–211 (GLTKELRIPT…CHGDGRVEKS (79 aa)) form a CR-type zinc finger. Zn(2+) is bound by residues Cys-146, Cys-149, Cys-163, Cys-166, Cys-185, Cys-188, Cys-199, and Cys-202. CXXCXGXG motif repeat units lie at residues 146 to 153 (CDLCEGSG), 163 to 170 (CGTCHGQG), 185 to 192 (CPTCHGRG), and 199 to 206 (CTKCHGDG).

It belongs to the DnaJ family. In terms of assembly, homodimer. Zn(2+) serves as cofactor.

The protein resides in the cytoplasm. Its function is as follows. Participates actively in the response to hyperosmotic and heat shock by preventing the aggregation of stress-denatured proteins and by disaggregating proteins, also in an autonomous, DnaK-independent fashion. Unfolded proteins bind initially to DnaJ; upon interaction with the DnaJ-bound protein, DnaK hydrolyzes its bound ATP, resulting in the formation of a stable complex. GrpE releases ADP from DnaK; ATP binding to DnaK triggers the release of the substrate protein, thus completing the reaction cycle. Several rounds of ATP-dependent interactions between DnaJ, DnaK and GrpE are required for fully efficient folding. Also involved, together with DnaK and GrpE, in the DNA replication of plasmids through activation of initiation proteins. The protein is Chaperone protein DnaJ of Shewanella baltica (strain OS223).